The chain runs to 34 residues: Voltage sensor toxin 3 (34 aa).

3 cysteine pairs are disulfide-bonded: Cys2-Cys17, Cys9-Cys22, and Cys16-Cys29.

It belongs to the neurotoxin 10 (Hwtx-1) family. 61 (VSTX3) subfamily. In terms of tissue distribution, expressed by the venom gland.

Its subcellular location is the secreted. Functionally, potent voltage-gated sodium channel blocker (IC(50)=190 nM and 210 nM on human and rat Nav1.3/SCN3A respectively, 430 nM on human Nav1.7/SCN9A, 770 nM and 290 nM on human and rat Nav1.8/SCN10A, respectively). Binds the voltage-sensor domain of the potassium channel KvAP (from Aeropyrum pernix) and weakly inhibits this channel. The sequence is that of Voltage sensor toxin 3 from Grammostola rosea (Chilean rose tarantula).